We begin with the raw amino-acid sequence, 214 residues long: Ribonuclease S-2 (214 aa).

The N-terminal stretch at 1 to 22 (MSKSQLTSVFFILLCALSPIYG) is a signal peptide. The cysteines at positions 38 and 43 are disulfide-linked. An N-linked (GlcNAc...) asparagine glycan is attached at Asn49. The active-site Proton donor is the His53. His53 is an RNA binding site. Asn59 is a glycosylation site (N-linked (GlcNAc...) asparagine). Cys67 and Cys116 are oxidised to a cystine. RNA-binding positions include 91-92 (DL), Lys94, and Phe105. The active site involves Glu109. Residue 112–113 (KH) coordinates RNA. Residue His113 is the Proton acceptor of the active site. Residue Asn160 is glycosylated (N-linked (GlcNAc...) asparagine). 2 disulfides stabilise this stretch: Cys175–Cys204 and Cys187–Cys198.

It belongs to the RNase T2 family.

The protein resides in the secreted. Its subcellular location is the extracellular space. The enzyme catalyses a ribonucleotidyl-ribonucleotide-RNA + H2O = a 3'-end 3'-phospho-ribonucleotide-RNA + a 5'-end dephospho-ribonucleoside-RNA + H(+). Self-incompatibility (SI) is the inherited ability of a flowering plant to prevent self-fertilization by discriminating between self and non-self pollen during pollination. In many species of the Solanaceae, self-incompatibility is controlled by the single, multiallelic locus S. This stylar glycoprotein is associated with expression of self-incompatibility in potato. This chain is Ribonuclease S-2 (S-2), found in Nicotiana alata (Winged tobacco).